Here is a 363-residue protein sequence, read N- to C-terminus: Protein-arginine kinase (363 aa).

The region spanning 24–255 is the Phosphagen kinase C-terminal domain; it reads IVLSSRIRLA…QQLIAQERAA (232 aa). ATP-binding positions include 27 to 31, H92, R126, 177 to 181, and 208 to 213; these read SSRIR, RASVM, and RGTYGE. The short motif at 338–343 is the RDXXRA motif of the pArg binding pocket involved in allosteric regulation element; the sequence is RDVRRA.

It belongs to the ATP:guanido phosphotransferase family.

The enzyme catalyses L-arginyl-[protein] + ATP = N(omega)-phospho-L-arginyl-[protein] + ADP + H(+). Appears to be allosterically activated by the binding of pArg-containing polypeptides to the pArg-binding pocket localized in the C-terminal domain of McsB. Catalyzes the specific phosphorylation of arginine residues in a large number of proteins. Is part of the bacterial stress response system. Protein arginine phosphorylation has a physiologically important role and is involved in the regulation of many critical cellular processes, such as protein homeostasis, motility, competence, and stringent and stress responses, by regulating gene expression and protein activity. The sequence is that of Protein-arginine kinase from Geobacillus kaustophilus (strain HTA426).